Reading from the N-terminus, the 457-residue chain is MDYDLIILGAGPAGYIAAEYAGKHKLKTLVIEKQYFGGVCLNVGCIPTKTLLKRAKIIDYLVHAKDYGITINGQAKLDWKQLLKQKQEVVDKLVAGVKTIIKGAKVESIEGEATVIDKNKVQVNNTTYTTNNIIVATGSRPRYLTLPGFEKAQQAGFIIDSTQALALEGVPKKFVVVGGGVIGVEFAFLFASLGSEVTIIQGVDRILEVCDSDVSELISKTLKNKGVQIITNAHVVRAENNQLFYTVNGVEQSVIGDKILVSIGRIANTECLDQLDLKRDHNNKIVLNEKLQTSTTNIYLIGDVNTQMMLAHYAYQQGRYAVDQILNQNQVKPAEKNKCPACIYTNPEVAFVGYSEMELQKEKIDYVKSSLPFIYSGKAIADHETNGFVKMMFNPKTGAILGGCIIASTASDIIAELALVMENNLTVFDIANSISPHPTMNEMVTDVCKKAIFDYFS.

FAD is bound by residues 32-40, lysine 49, and alanine 113; that span reads EKQYFGGVC. Cysteine 40 and cysteine 45 are disulfide-bonded. NAD(+)-binding positions include 178-182, valine 235, and 262-265; these read GGGVI and SIGR. Positions 303 and 311 each coordinate FAD. The active-site Proton acceptor is histidine 437.

The protein belongs to the class-I pyridine nucleotide-disulfide oxidoreductase family. In terms of assembly, homodimer. The cofactor is FAD.

It is found in the cytoplasm. The enzyme catalyses N(6)-[(R)-dihydrolipoyl]-L-lysyl-[protein] + NAD(+) = N(6)-[(R)-lipoyl]-L-lysyl-[protein] + NADH + H(+). Functionally, lipoamide dehydrogenase is a component of the alpha-ketoacid dehydrogenase complexes. This chain is Dihydrolipoyl dehydrogenase (pdhD), found in Mycoplasma genitalium (strain ATCC 33530 / DSM 19775 / NCTC 10195 / G37) (Mycoplasmoides genitalium).